Here is a 590-residue protein sequence, read N- to C-terminus: L-fucose isomerase (590 aa).

Catalysis depends on proton acceptor residues Glu337 and Asp361. Mn(2+) is bound by residues Glu337, Asp361, and His528.

This sequence belongs to the L-fucose isomerase family. Mn(2+) serves as cofactor.

The protein resides in the cytoplasm. The enzyme catalyses L-fucose = L-fuculose. Its pathway is carbohydrate degradation; L-fucose degradation; L-lactaldehyde and glycerone phosphate from L-fucose: step 1/3. In terms of biological role, converts the aldose L-fucose into the corresponding ketose L-fuculose. This chain is L-fucose isomerase, found in Bacteroides fragilis (strain YCH46).